The chain runs to 338 residues: Glycerol-3-phosphate dehydrogenase [NAD(P)+] (338 aa).

NADPH is bound by residues Trp-12, His-33, and Lys-110. Sn-glycerol 3-phosphate contacts are provided by Lys-110, Gly-142, and Ser-144. Ala-146 provides a ligand contact to NADPH. Sn-glycerol 3-phosphate is bound by residues Lys-197, Asp-250, Ser-260, Arg-261, and Asn-262. The active-site Proton acceptor is the Lys-197. NADPH is bound at residue Arg-261. Positions 286 and 288 each coordinate NADPH.

Belongs to the NAD-dependent glycerol-3-phosphate dehydrogenase family.

Its subcellular location is the cytoplasm. It catalyses the reaction sn-glycerol 3-phosphate + NAD(+) = dihydroxyacetone phosphate + NADH + H(+). It carries out the reaction sn-glycerol 3-phosphate + NADP(+) = dihydroxyacetone phosphate + NADPH + H(+). The protein operates within membrane lipid metabolism; glycerophospholipid metabolism. Catalyzes the reduction of the glycolytic intermediate dihydroxyacetone phosphate (DHAP) to sn-glycerol 3-phosphate (G3P), the key precursor for phospholipid synthesis. This is Glycerol-3-phosphate dehydrogenase [NAD(P)+] from Acidobacterium capsulatum (strain ATCC 51196 / DSM 11244 / BCRC 80197 / JCM 7670 / NBRC 15755 / NCIMB 13165 / 161).